A 449-amino-acid chain; its full sequence is UDP-N-acetylmuramoylalanine--D-glutamate ligase (449 aa).

Residue 113–119 (GTNGKTT) coordinates ATP.

This sequence belongs to the MurCDEF family.

Its subcellular location is the cytoplasm. It catalyses the reaction UDP-N-acetyl-alpha-D-muramoyl-L-alanine + D-glutamate + ATP = UDP-N-acetyl-alpha-D-muramoyl-L-alanyl-D-glutamate + ADP + phosphate + H(+). The protein operates within cell wall biogenesis; peptidoglycan biosynthesis. In terms of biological role, cell wall formation. Catalyzes the addition of glutamate to the nucleotide precursor UDP-N-acetylmuramoyl-L-alanine (UMA). The sequence is that of UDP-N-acetylmuramoylalanine--D-glutamate ligase from Microcystis aeruginosa (strain NIES-843 / IAM M-2473).